A 120-amino-acid polypeptide reads, in one-letter code: UPF0091 protein PH1455 (120 aa).

It belongs to the UPF0091 family.

The protein is UPF0091 protein PH1455 of Pyrococcus horikoshii (strain ATCC 700860 / DSM 12428 / JCM 9974 / NBRC 100139 / OT-3).